Here is a 344-residue protein sequence, read N- to C-terminus: MIKNITGIAMSGGVDSTATAILQKQKGPVLGFFMKLNQPDYETQRDRVSQIAQKLDIKLEIIDLTEEFQEYVLKYFSASYFKGLTPNPCIICNKEIKFGLFQQAILRQGVERIATGHYAQIHKTAAGYQLHKGVDPHKDQSYFLSRLSQEQLAHSIFPLGGMHKGAIYDLVEAHGFHDFRGTESQDVCFLEQDNVVDFLEQTAEFSASSGNIVMNDGKILGKHKGLHRYTVGQRRGLGISYPVPLYVINLDVKNNNVIVGENEQLFHKTMAISDIHWISQPEREDLLHASVHIRSTHKGAQASVILKENNRASVIFDEPQRAITPGQFATIYKDTQVLGSGVIL.

ATP contacts are provided by residues 9–16 (AMSGGVDS) and M34. The active-site Nucleophile is the C92. C92 and C188 are oxidised to a cystine. G116 lines the ATP pocket. An interaction with tRNA region spans residues 138 to 140 (KDQ). C188 serves as the catalytic Cysteine persulfide intermediate.

Belongs to the MnmA/TRMU family.

It localises to the cytoplasm. The enzyme catalyses S-sulfanyl-L-cysteinyl-[protein] + uridine(34) in tRNA + AH2 + ATP = 2-thiouridine(34) in tRNA + L-cysteinyl-[protein] + A + AMP + diphosphate + H(+). In terms of biological role, catalyzes the 2-thiolation of uridine at the wobble position (U34) of tRNA, leading to the formation of s(2)U34. The chain is tRNA-specific 2-thiouridylase MnmA from Desulfotalea psychrophila (strain LSv54 / DSM 12343).